We begin with the raw amino-acid sequence, 304 residues long: MGQCVTKCKNPSSTLGSKNGDRDPSNKSHSRRGASHREEQVPPCGKPAGDILVNGTKKAEAATEACQLPTSSGDAGRESKTNAEESSLQRLEELFRRYKDEREDAILEEGMERFCNDLCVDPTEFRVLLLAWKFQAATMCKFTRKEFFDGCKAISADSIDGICARFPSLLTEAKQEDKFKDLYRFTFQFGLDSEEGQRSLHREIAIALWKLVFTQNNPPVLDQWLNFLTENPSGIKGISRDTWNMFLNFTQVIGPDLSNYSEDEAWPSLFDTFVEWEMERRKREVEGRGTLSSGQEGLCPEEQT.

2 disordered regions span residues 1–87 and 284–304; these read MGQC…EESS and EVEG…EEQT. The N-myristoyl glycine moiety is linked to residue Gly-2. Residues 86-278 enclose the DCUN1 domain; sequence SSLQRLEELF…LFDTFVEWEM (193 aa).

In terms of assembly, part of a complex containing DCUN1D3, CUL3 and RBX1. Interacts (via the DCUN1 domain) with the unneddylated cullins: interacts with CUL1, CUL2, CUL3, CUL4A, CUL4B and CUL5; these interactions promote the cullin neddylation and the identity of the cullin dictates the affinity of the interaction. Interacts preferentially with CUL3; this interaction triggers the relocalization of CUL3 to the cell membrane where CUL3 is neddylated. Interacts (via DCUN1 domain) with RBX1. May also interact with regulators or subunits of cullin-RING ligases such as RNF7, ELOB and DDB1; these interactions are bridged by cullins. Interacts (via DCUN1 domain) with CAND1; this interaction is bridged by cullins and strongly inhibits cullin neddylation. These CAND-cullin-DCNL complexes can only be neddylated in the presence of a substrate adapter. Interacts (via DCUN1 domain) with the N-terminally acetylated form of UBE2M and UBE2F. As to expression, highest levels of expression are in the testis. Very low levels of expression in the heart, brain, skeletal muscle, kidney, liver, spleen, lung and ovary.

The protein localises to the cell membrane. The protein resides in the cytoplasm. Its subcellular location is the nucleus. It is found in the perinuclear region. Its function is as follows. Contributes to the neddylation of all cullins by transferring NEDD8 from N-terminally acetylated NEDD8-conjugating E2s enzyme to different cullin C-terminal domain-RBX complexes and may play a role in the cell cycle progression by regulating the SCF ubiquitin E3 ligase complex, after UV damage. At the cell membrane, can promote and as well inhibit cullins neddylation. This Mus musculus (Mouse) protein is DCN1-like protein 3.